The following is a 563-amino-acid chain: MMISEKPLGEESIRQDLEVLTVSRRLVKSVSQKLKKKIHKTEVVEDEEVARGAVNCLSISVGCRVADTGEDFEEDLSNKRWSSASEDGKGLMTICGTEEIRLDCFSYGVRERFWKKNNRRYLADSGQDYRKHVYLPDDILEMCLMRLPLTSLLNAHLVCKKWQSMANTQRFLQMRREGSFQTPWLFLFAALKDGCSSGDIHGYDVSQDKWHRIETDLLKGRFMYSVTSIHEEIYIVGGRSMDRNSFKSHRGILVFSPSIKAWRKIASMRHARSLPIVGATEVTSEFSTMQTKQNRQDRRFHLSRVGGESDVYEDPHRLSVRRQNRNSADQNGTKSHRLIRQKLDRLNRNSSKRFVLIAIGGTGIFDEPLDSGEIYDSATNTWSEMQRLPMGFGVVSCGIICNGIFYAYSENDKLSGYDIERGFWITIQTSPIPPRVHEFYPKLVSCNHRLFMLSVSWCDEGDGQIGRRNKAVRKLWELDLVYLTWTEVSVHPDAPMDWNATYVSDQNILMGVEMFKIFGQVLSFFTVCDILTEEASWRHVSRNQRNQKLNLSCMNKTIALLHL.

Residues Y129–R175 enclose the F-box domain. 3 Kelch repeats span residues W184 to E231, E232 to V282, and V355 to N402.

The chain is F-box/kelch-repeat protein At5g42360 from Arabidopsis thaliana (Mouse-ear cress).